Here is a 267-residue protein sequence, read N- to C-terminus: MENLNALILGIIEGLTEFLPVSSTGHMILGTTILGIDIDEFWKSFLIIIQLGSILAVIFVFWRKLFQGLDIWLKLAAGFFPTGVIGLFVAKYLNALFNGWVVVGMLIFGGVVFILIELAHKNKQYRINSLEEISFKQAFCIGIFQSLAMIPGTSRSGASIIGGLLLGFNRKVAAEFSFLLAIPTMIIATAYSIYKEPELLSNANSLIPLGIGFITAFVVAVLVIKFFLKFISKFDFIPFGIYRIILGFVFFYLYYSGILNAGSEFKL.

The next 7 membrane-spanning stretches (helical) occupy residues 7-29 (LILG…HMIL), 41-61 (FWKS…IFVF), 69-89 (LDIW…GLFV), 96-116 (LFNG…FILI), 173-193 (AAEF…AYSI), 207-227 (IPLG…IKFF), and 239-259 (FGIY…SGIL).

Belongs to the UppP family.

The protein localises to the cell inner membrane. The catalysed reaction is di-trans,octa-cis-undecaprenyl diphosphate + H2O = di-trans,octa-cis-undecaprenyl phosphate + phosphate + H(+). Its function is as follows. Catalyzes the dephosphorylation of undecaprenyl diphosphate (UPP). Confers resistance to bacitracin. The polypeptide is Undecaprenyl-diphosphatase (Campylobacter jejuni subsp. jejuni serotype O:6 (strain 81116 / NCTC 11828)).